Here is a 465-residue protein sequence, read N- to C-terminus: Hepatocyte nuclear factor 6 (465 aa).

2 disordered regions span residues Gly-15–His-84 and Ser-119–Leu-141. Positions Pro-123–Arg-140 are enriched in basic residues. The CUT DNA-binding region spans Gly-283–Ala-369. Positions Pro-385–Trp-444 form a DNA-binding region, homeobox. The disordered stretch occupies residues Asp-442–Ala-465. Residues Gly-448–Ala-465 show a composition bias toward low complexity.

The protein belongs to the CUT homeobox family. In terms of assembly, binds DNA as a monomer. Expressed in liver, brain, spleen and testis.

The protein resides in the nucleus. Its function is as follows. Transcriptional activator. Binds the consensus sequence 5'-DHWATTGAYTWWD-3' on a variety of gene promoters such as those of HNF3B and TTR. Important for liver genes transcription. The affinity of HNF-6-alpha and HNF-6-beta for DNA differs depending on the target sequence. This chain is Hepatocyte nuclear factor 6 (Onecut1), found in Rattus norvegicus (Rat).